Reading from the N-terminus, the 281-residue chain is MITSAHIDDIRTQVRAWHAKGETVAFVPTMGNLHQGHITLVKEAAKKCDHVVVSIFVNPMQFGQNEDLDAYPRTLEADSQALTAAGAELLFTPTPTVIYPKGLAQQTYVEVPGISDVLCGASRPGHFRGVATVVCKLFNIVQPDVAFFGNKDYQQLLVIRTMVEDLSLPIEIIGVDTIREASGLAMSSRNGYLTAEEKAAAPALKKAIDAMAQGIKQGVSIEQVTAEAKASLIAAGFTPDYLEVCHATTLANAETTDQALVILAAAYLGKARLIDNLRFDR.

30–37 (MGNLHQGH) is an ATP binding site. Histidine 37 (proton donor) is an active-site residue. Glutamine 61 lines the (R)-pantoate pocket. Residue glutamine 61 participates in beta-alanine binding. 149 to 152 (GNKD) lines the ATP pocket. Glutamine 155 lines the (R)-pantoate pocket. ATP is bound by residues isoleucine 178 and 186-189 (MSSR).

The protein belongs to the pantothenate synthetase family. Homodimer.

The protein localises to the cytoplasm. It carries out the reaction (R)-pantoate + beta-alanine + ATP = (R)-pantothenate + AMP + diphosphate + H(+). Its pathway is cofactor biosynthesis; (R)-pantothenate biosynthesis; (R)-pantothenate from (R)-pantoate and beta-alanine: step 1/1. Functionally, catalyzes the condensation of pantoate with beta-alanine in an ATP-dependent reaction via a pantoyl-adenylate intermediate. This is Pantothenate synthetase from Shewanella sp. (strain ANA-3).